The chain runs to 239 residues: RNA-binding protein 38 (239 aa).

The RRM domain maps to 34–111 (TKIFVGGLPY…RKANVNLAYL (78 aa)).

The protein belongs to the RBM38 family.

It localises to the cytoplasm. The protein resides in the cytosol. Its subcellular location is the nucleus. Its function is as follows. RNA-binding protein that specifically bind the 3'-UTR of CDKN1A transcripts, leading to maintain the stability of CDKN1A transcripts, thereby acting as a mediator of the p53/TP53 family to regulate CDKN1A. CDKN1A is a cyclin-dependent kinase inhibitor transcriptionally regulated by the p53/TP53 family to induce cell cycle arrest. Isoform 1, but not isoform 2, has the ability to induce cell cycle arrest in G1 and maintain the stability of CDKN1A transcripts induced by p53/TP53. Also acts as a mRNA splicing factor. Specifically regulates the expression of FGFR2-IIIb, an epithelial cell-specific isoform of FGFR2. Plays a role in myogenic differentiation. (Microbial infection) Essential factor for the splicing of the pre-mRNAs of human parvovirus B19 (B19V) and for the expression of B19V 11-kDa protein, which enhances viral replication. In Homo sapiens (Human), this protein is RNA-binding protein 38 (RBM38).